The sequence spans 338 residues: Ketol-acid reductoisomerase (NADP(+)) (338 aa).

In terms of domain architecture, KARI N-terminal Rossmann spans 1-181; that stretch reads MKVFYDKDAD…GGGRAGIIET (181 aa). NADP(+) contacts are provided by residues 24 to 27, R47, and S52; that span reads YGSQ. The active site involves H107. Position 133 (G133) interacts with NADP(+). The KARI C-terminal knotted domain occupies 182 to 327; the sequence is NFREETETDL…SKLRAMMPWI (146 aa). Mg(2+)-binding residues include D190, E194, E226, and E230. S251 provides a ligand contact to substrate.

Belongs to the ketol-acid reductoisomerase family. Requires Mg(2+) as cofactor.

The catalysed reaction is (2R)-2,3-dihydroxy-3-methylbutanoate + NADP(+) = (2S)-2-acetolactate + NADPH + H(+). It catalyses the reaction (2R,3R)-2,3-dihydroxy-3-methylpentanoate + NADP(+) = (S)-2-ethyl-2-hydroxy-3-oxobutanoate + NADPH + H(+). Its pathway is amino-acid biosynthesis; L-isoleucine biosynthesis; L-isoleucine from 2-oxobutanoate: step 2/4. It functions in the pathway amino-acid biosynthesis; L-valine biosynthesis; L-valine from pyruvate: step 2/4. Functionally, involved in the biosynthesis of branched-chain amino acids (BCAA). Catalyzes an alkyl-migration followed by a ketol-acid reduction of (S)-2-acetolactate (S2AL) to yield (R)-2,3-dihydroxy-isovalerate. In the isomerase reaction, S2AL is rearranged via a Mg-dependent methyl migration to produce 3-hydroxy-3-methyl-2-ketobutyrate (HMKB). In the reductase reaction, this 2-ketoacid undergoes a metal-dependent reduction by NADPH to yield (R)-2,3-dihydroxy-isovalerate. In Burkholderia thailandensis (strain ATCC 700388 / DSM 13276 / CCUG 48851 / CIP 106301 / E264), this protein is Ketol-acid reductoisomerase (NADP(+)).